Consider the following 242-residue polypeptide: NAD-dependent protein deacetylase 1 (242 aa).

The Deacetylase sirtuin-type domain maps to 1 to 242 (MTITSWLAAS…LNEQLAEVDP (242 aa)). Positions 19, 23, 30, 31, 97, 99, 100, and 115 each coordinate NAD(+). Phe30 contributes to the nicotinamide binding site. Nicotinamide contacts are provided by Val99 and Asp100. The Proton acceptor role is filled by His115. Zn(2+) is bound by residues Cys123, Cys126, Cys142, and Cys144. NAD(+) contacts are provided by Ser182, Ser183, Asn207, and Ile226.

It belongs to the sirtuin family. Class U subfamily. The cofactor is Zn(2+).

Its subcellular location is the cytoplasm. The catalysed reaction is N(6)-acetyl-L-lysyl-[protein] + NAD(+) + H2O = 2''-O-acetyl-ADP-D-ribose + nicotinamide + L-lysyl-[protein]. NAD-dependent protein deacetylase which modulates the activities of several enzymes which are inactive in their acetylated form. The protein is NAD-dependent protein deacetylase 1 of Geobacillus kaustophilus (strain HTA426).